Reading from the N-terminus, the 410-residue chain is Proteasome-activating nucleotidase (410 aa).

Positions 1–70 (MENNSQNVLK…LRGEIERFRT (70 aa)) form a coiled coil. ATP contacts are provided by residues 195–200 (GTGKTL) and His334. The interval 408–410 (MFG) is docks into pockets in the proteasome alpha-ring to cause gate opening.

Belongs to the AAA ATPase family. As to quaternary structure, homohexamer. The hexameric complex has a two-ring architecture resembling a top hat that caps the 20S proteasome core at one or both ends. Upon ATP-binding, the C-terminus of PAN interacts with the alpha-rings of the proteasome core by binding to the intersubunit pockets.

Its subcellular location is the cytoplasm. Its function is as follows. ATPase which is responsible for recognizing, binding, unfolding and translocation of substrate proteins into the archaeal 20S proteasome core particle. Is essential for opening the gate of the 20S proteasome via an interaction with its C-terminus, thereby allowing substrate entry and access to the site of proteolysis. Thus, the C-termini of the proteasomal ATPase function like a 'key in a lock' to induce gate opening and therefore regulate proteolysis. Unfolding activity requires energy from ATP hydrolysis, whereas ATP binding alone promotes ATPase-20S proteasome association which triggers gate opening, and supports translocation of unfolded substrates. The sequence is that of Proteasome-activating nucleotidase from Methanothermobacter thermautotrophicus (strain ATCC 29096 / DSM 1053 / JCM 10044 / NBRC 100330 / Delta H) (Methanobacterium thermoautotrophicum).